Here is a 335-residue protein sequence, read N- to C-terminus: tRNA N6-adenosine threonylcarbamoyltransferase (335 aa).

The a divalent metal cation site is built by His-109, His-113, and Tyr-130. Substrate-binding positions include 130–134 (YVSGG), Asp-162, Gly-177, Glu-181, and Asn-266. Asp-294 serves as a coordination point for a divalent metal cation.

Belongs to the KAE1 / TsaD family. In terms of assembly, component of the EKC/KEOPS complex composed of at least tp53rk, tprkb, osgep and lage3; the whole complex dimerizes. The cofactor is a divalent metal cation.

It is found in the cytoplasm. It localises to the nucleus. It catalyses the reaction L-threonylcarbamoyladenylate + adenosine(37) in tRNA = N(6)-L-threonylcarbamoyladenosine(37) in tRNA + AMP + H(+). Its function is as follows. Component of the EKC/KEOPS complex that is required for the formation of a threonylcarbamoyl group on adenosine at position 37 (t(6)A37) in tRNAs that read codons beginning with adenine. The complex is probably involved in the transfer of the threonylcarbamoyl moiety of threonylcarbamoyl-AMP (TC-AMP) to the N6 group of A37. OSGEP likely plays a direct catalytic role in this reaction, but requires other protein(s) of the complex to fulfill this activity. The protein is tRNA N6-adenosine threonylcarbamoyltransferase of Danio rerio (Zebrafish).